Reading from the N-terminus, the 65-residue chain is uncharacterized protein (65 aa).

This is an uncharacterized protein from Bacillus subtilis (strain 168).